A 559-amino-acid chain; its full sequence is Polypeptide N-acetylgalactosaminyltransferase 1 (559 aa).

Residues 1 to 8 lie on the Cytoplasmic side of the membrane; the sequence is MRKFAYCK. The chain crosses the membrane as a helical; Signal-anchor for type II membrane protein span at residues 9 to 28; sequence VVLATSLVWVLLDMFLLLYF. Residues 29–559 lie on the Lumenal side of the membrane; it reads SECNKCEEKK…LRNVTLPEIF (531 aa). A glycan (N-linked (GlcNAc...) asparagine) is linked at asparagine 95. Disulfide bonds link cysteine 106-cysteine 339, cysteine 330-cysteine 408, cysteine 442-cysteine 459, cysteine 482-cysteine 497, and cysteine 523-cysteine 540. Residues 115–225 form a catalytic subdomain A region; sequence LPTTSVVIVF…VGWLEPLLAR (111 aa). Residues aspartate 156 and arginine 186 each coordinate substrate. Residues aspartate 209 and histidine 211 each coordinate Mn(2+). Positions 285–347 are catalytic subdomain B; the sequence is PVRTPTMAGG…TCSHVGHVFR (63 aa). Residue tryptophan 316 coordinates substrate. Histidine 344 serves as a coordination point for Mn(2+). Arginine 347 and tyrosine 352 together coordinate substrate. Residues 429-551 enclose the Ricin B-type lectin domain; it reads FSLGEIRNVE…GSRSQQWLLR (123 aa). Asparagine 552 carries an N-linked (GlcNAc...) asparagine glycan.

The protein belongs to the glycosyltransferase 2 family. GalNAc-T subfamily. Mn(2+) is required as a cofactor. In terms of tissue distribution, heart, brain, spleen, liver, skeletal muscle and kidney.

Its subcellular location is the golgi apparatus. It is found in the golgi stack membrane. The protein localises to the secreted. The enzyme catalyses L-seryl-[protein] + UDP-N-acetyl-alpha-D-galactosamine = a 3-O-[N-acetyl-alpha-D-galactosaminyl]-L-seryl-[protein] + UDP + H(+). It carries out the reaction L-threonyl-[protein] + UDP-N-acetyl-alpha-D-galactosamine = a 3-O-[N-acetyl-alpha-D-galactosaminyl]-L-threonyl-[protein] + UDP + H(+). Its pathway is protein modification; protein glycosylation. In terms of biological role, catalyzes the initial reaction in O-linked oligosaccharide biosynthesis, the transfer of an N-acetyl-D-galactosamine residue to a serine or threonine residue on the protein receptor. Has a broad spectrum of substrates such as apomucin-, MUC5AC-, MUC1- and MUC2-derived peptides. The chain is Polypeptide N-acetylgalactosaminyltransferase 1 from Rattus norvegicus (Rat).